The sequence spans 172 residues: Methylated-DNA--protein-cysteine methyltransferase (172 aa).

The active-site Nucleophile; methyl group acceptor is cysteine 142.

It belongs to the MGMT family.

It localises to the cytoplasm. The catalysed reaction is a 6-O-methyl-2'-deoxyguanosine in DNA + L-cysteinyl-[protein] = S-methyl-L-cysteinyl-[protein] + a 2'-deoxyguanosine in DNA. The enzyme catalyses a 4-O-methyl-thymidine in DNA + L-cysteinyl-[protein] = a thymidine in DNA + S-methyl-L-cysteinyl-[protein]. Involved in the cellular defense against the biological effects of O6-methylguanine (O6-MeG) and O4-methylthymine (O4-MeT) in DNA. Repairs the methylated nucleobase in DNA by stoichiometrically transferring the methyl group to a cysteine residue in the enzyme. This is a suicide reaction: the enzyme is irreversibly inactivated. The chain is Methylated-DNA--protein-cysteine methyltransferase from Pyrococcus abyssi (strain GE5 / Orsay).